The sequence spans 249 residues: Derlin-2 (249 aa).

The Cytoplasmic segment spans residues 1-21 (MAQAVEEWYRQMPIITRSYLT). Residues 22 to 42 (AAVVTTVGCTLEIISPYHLYL) form a helical membrane-spanning segment. Topologically, residues 43–96 (NPKLVVQHYEIWRLVTNFLYFRKMDLDFLFHMFFLARYCKLLEENSFRGRTADF) are lumenal. The chain crosses the membrane as a helical span at residues 97–117 (FYMLLFGATVLTGIVLIGGMI). Topologically, residues 118 to 122 (PYISE) are cytoplasmic. A helical membrane pass occupies residues 123–143 (TFARILFLSNSLTFMMVYVWS). Over 144–152 (KHNPFIHMS) the chain is Lumenal. A helical membrane pass occupies residues 153–173 (FLGLFTFTAAYLPWVLLGFSI). Over 174-249 (LVGSSTWVDL…GAMGADPQAQ (76 aa)) the chain is Cytoplasmic.

The protein belongs to the derlin family.

It is found in the endoplasmic reticulum membrane. Its function is as follows. May be involved in the degradation process of specific misfolded endoplasmic reticulum (ER) luminal proteins. This Oryza sativa subsp. japonica (Rice) protein is Derlin-2 (DER2).